A 354-amino-acid polypeptide reads, in one-letter code: Rhodopsin (354 aa).

The Extracellular segment spans residues 1-36 (MNGTEGPYFYVPMVNTTGIVRSPYEYPQYYLVSPAA). N-linked (GlcNAc...) asparagine glycosylation is found at asparagine 2 and asparagine 15. The helical transmembrane segment at 37–61 (YACLGAYMFFLILVGFPINFLTLYV) threads the bilayer. The Cytoplasmic segment spans residues 62–73 (TIEHKKLRTPLN). A helical membrane pass occupies residues 74 to 96 (YILLNLAVADLFMVFGGFTTTIY). Residues 97–110 (TSMHGYFVLGRLGC) are Extracellular-facing. Cysteine 110 and cysteine 187 are disulfide-bonded. Residues 111-133 (NLEGYFATLGGEIGLWSLVVLAV) form a helical membrane-spanning segment. Positions 134–136 (ERW) match the 'Ionic lock' involved in activated form stabilization motif. Residues 134–152 (ERWLVVCKPISNFRFSENH) are Cytoplasmic-facing. A helical membrane pass occupies residues 153–173 (AIMGLVFTWIMANSCAAPPLL). At 174–202 (GWSRYIPEGMQCSCGVDYYTRAEGFNNES) the chain is on the extracellular side. The chain crosses the membrane as a helical span at residues 203-224 (FVIYMFICHFCIPLIVVFFCYG). Topologically, residues 225-252 (RLLCAVKEAAAAQQESETTQRAEREVTR) are cytoplasmic. Residues 253 to 274 (MVVIMVIGFLVCWIPYASVAWY) form a helical membrane-spanning segment. Topologically, residues 275–286 (IFTHQGSEFGPL) are extracellular. The chain crosses the membrane as a helical span at residues 287-308 (FMTVPAFFAKSASIYNPLIYIC). N6-(retinylidene)lysine is present on lysine 296. Residues 309-354 (MNKQFRHCMITTLCCGKNPFEEEEGASTTASKTEASSVSSSSVSPA) lie on the Cytoplasmic side of the membrane. 2 S-palmitoyl cysteine lipidation sites follow: cysteine 322 and cysteine 323. A disordered region spans residues 333 to 354 (GASTTASKTEASSVSSSSVSPA). The span at 334–354 (ASTTASKTEASSVSSSSVSPA) shows a compositional bias: low complexity.

This sequence belongs to the G-protein coupled receptor 1 family. Opsin subfamily. Phosphorylated on some or all of the serine and threonine residues present in the C-terminal region. Post-translationally, contains one covalently linked retinal chromophore.

The protein resides in the membrane. It is found in the cell projection. Its subcellular location is the cilium. It localises to the photoreceptor outer segment. In terms of biological role, photoreceptor required for image-forming vision at low light intensity. While most salt water fish species use retinal as chromophore, most freshwater fish use 3-dehydroretinal, or a mixture of retinal and 3-dehydroretinal. Light-induced isomerization of 11-cis to all-trans retinal triggers a conformational change that activates signaling via G-proteins. Subsequent receptor phosphorylation mediates displacement of the bound G-protein alpha subunit by arrestin and terminates signaling. The polypeptide is Rhodopsin (rho) (Poecilia reticulata (Guppy)).